The sequence spans 444 residues: Flagellum-specific ATP synthase (444 aa).

Position 164 to 171 (164 to 171 (AGSGVGKS)) interacts with ATP.

Belongs to the ATPase alpha/beta chains family.

The protein localises to the cytoplasm. It carries out the reaction ATP + H2O + 4 H(+)(in) = ADP + phosphate + 5 H(+)(out). Its function is as follows. Probable catalytic subunit of a protein translocase for flagellum-specific export, or a proton translocase involved in local circuits at the flagellum. This is Flagellum-specific ATP synthase (fliI) from Caulobacter vibrioides (strain ATCC 19089 / CIP 103742 / CB 15) (Caulobacter crescentus).